The following is a 1582-amino-acid chain: MICLAALAVAVPARADEAAAVRDKPNPTLAEVPASGYVPFTGQPFFLLSDASYGTDQEAMVRLEAPGREYKDELARYGGADILVYRVPQPLDFLKAQKNLHRIDVKANYTGEGLANTLAYLWDNWTRQARRAWQRVLSFATRSKAVEAAPQFSMGDQMAAPTRFSNPPQYAPLKGYELLGRFRYPIWEAKPIAPPKDVKLEGSSSEWMPQNVGNVMIPVGKLPAGLYIVEAVIGAYRAHTLLFVSDTVAVTKGTSQGMMVWTAERKSGKPVAGSAVSWTDGVGVLASGTTQADGTAELRHVAPERSYVLGVDRAGGVFISENFYYDSEIYNTKLYAFTDRPLYRPGDDVRVKFIGRNFRSATESTAPAAGDIKLDVIDPTGAPVATTTTRLSGETGADARFTLPSNAQAGGYTLRFDYGGSTYGGAFRVAEYIKPHFDVNLSLDKAGYGTGEAIKGKISLRYPDGKPVKDGKVSVSLRAQQVTMVEGELQYAGLFPVKLEQQELTTDGDGNAALTLPAAKEPSRYVVTVFANDGAAYRVKVTRELLVARGAAPYRLSTAANFTTPGQSVSFNLQPLPAVDGVRGASAPPAKWELVRLESRTRTEGALQPDAKGSATFPVKFEQPGSYTLSVRDAAGNLLAASSHWVAGDGVQTVPGNIEIVFDRDRYQIGDTAEALITFPQPVDDALLTLERDKVERHALLSGGGDWLALQRVTPSQYRARIKIGAEFSPNMTFSALTVRDGDMVFQNAGIVVTQPALDLTVRADKAVYAPGETVTLDLSSALAGKPVPANLTVSVVDEMVYVLQPEVAPSIVDFFYHPRRNSVRTTSSQSFISYDLALSSLPGKPGGTYGRHNERGVKVLERPRRDEQDTAAWVANLQTGADGRARMTFTMPDSLARWRVTVRAVSTTGAADGIVGQRTASIRSDKALYLKWTGPSRFRESDQPRLDMVAFNQTDKDITADWIVSGAGLNINQRVTLKRGANYLHAPLSGTPALQAGIVNAELKQDDRVSDRLQTTVKLDATGWLADRESIVPLTQLQGTRLPLGLPADARDVRLRVVGNTASQFARVADDLIEYPYGCAEQTASRLIPLALAQQSLAATGARLPDGNPAGTQGVDALLRTQRQRLALLAGTNGTFGWWGELTSSSALITSYAYYADWLASRAVGISLPADNWKQVLEAYKRTSQNEPLLHRALALWFANEMGLPVATPLSGVAAELARNAKAPADAEPAPGDSLIFVAPDSPRGRQVAAILTAQLMRQVGQPVPEALVSADIAARTALANDTSPLVQSLLLMGGGRSAADPAPLLARASAAMPTMDRAVALVWLQKGLGGLQGANVAAIQPVLSAGGWQAARSTVGVPTWRWAGAQPPAALDLASTPSDVTTQSAIVSYRSRAPEASRLPITVERKLYRLEPVDAAAPKDDAKAPKRAAADVTANAGITFKAKPVKPGDTLDSNALYVDEVVLTPRQGTYRYGLVEVPLPPGAEVEATTWGIQIDGLKGEPNEGNGPQPFERRAAYEMGQLSYNQPVPTLERPTALRQLVRFSLPGRFALPPARYFRMYQPEAKALQGDGKAASYPFKVE.

The N-terminal stretch at 1–15 (MICLAALAVAVPARA) is a signal peptide. The isoglutamyl cysteine thioester (Cys-Gln) cross-link spans 1080-1083 (CAEQ).

This sequence belongs to the protease inhibitor I39 (alpha-2-macroglobulin) family. Bacterial alpha-2-macroglobulin subfamily.

In terms of biological role, protects the bacterial cell from host peptidases. This is Alpha-2-macroglobulin from Ralstonia nicotianae (strain ATCC BAA-1114 / GMI1000) (Ralstonia solanacearum).